The chain runs to 714 residues: Ribonucleoside-diphosphate reductase 2 subunit alpha (714 aa).

Substrate contacts are provided by residues Thr161, 177 to 178 (SC), Gly206, 386 to 390 (NLCSE), and 588 to 592 (PTGSI). An intrachain disulfide couples Cys178 to Cys415. The active-site Proton acceptor is the Asn386. Cys388 serves as the catalytic Cysteine radical intermediate. The active-site Proton acceptor is Glu390.

Belongs to the ribonucleoside diphosphate reductase large chain family. Tetramer of two alpha and two beta subunits.

It carries out the reaction a 2'-deoxyribonucleoside 5'-diphosphate + [thioredoxin]-disulfide + H2O = a ribonucleoside 5'-diphosphate + [thioredoxin]-dithiol. With respect to regulation, under complex allosteric control mediated by deoxynucleoside triphosphates and ATP binding. The type of nucleotide bound at the specificity site determines substrate preference. It seems probable that ATP makes the enzyme reduce CDP and UDP, dGTP favors ADP reduction and dTTP favors GDP reduction. Provides the precursors necessary for DNA synthesis. Catalyzes the biosynthesis of deoxyribonucleotides from the corresponding ribonucleotides. R1E contains the binding sites for both substrates and allosteric effectors and carries out the actual reduction of the ribonucleotide. The chain is Ribonucleoside-diphosphate reductase 2 subunit alpha (nrdE) from Escherichia coli (strain K12).